Reading from the N-terminus, the 583-residue chain is Leucine aminopeptidase 2, chloroplastic (583 aa).

A chloroplast-targeting transit peptide spans 1-70 (MAVTLVTSFA…ISHATLGLTQ (70 aa)). Residues Lys351 and Asp356 each coordinate Mn(2+). Lys363 is a catalytic residue. Mn(2+)-binding residues include Asp376, Asp436, and Glu438. The active site involves Arg440.

It belongs to the peptidase M17 family. Homohexamer (dimer of homotrimers). Mn(2+) is required as a cofactor.

The protein resides in the plastid. It localises to the chloroplast. It carries out the reaction Release of an N-terminal amino acid, Xaa-|-Yaa-, in which Xaa is preferably Leu, but may be other amino acids including Pro although not Arg or Lys, and Yaa may be Pro. Amino acid amides and methyl esters are also readily hydrolyzed, but rates on arylamides are exceedingly low.. It catalyses the reaction Release of N-terminal proline from a peptide.. Its function is as follows. Presumably involved in the processing and regular turnover of intracellular proteins. Catalyzes the removal of unsubstituted N-terminal amino acids from various peptides. Possesses leucine aminopeptidase activity against the model substrate leucine-amido methyl coumarin. Does not seem to possess Cys-Gly dipeptidase activity. Functions as a molecular chaperone to protect proteins from heat-induced damage. The chain is Leucine aminopeptidase 2, chloroplastic from Arabidopsis thaliana (Mouse-ear cress).